We begin with the raw amino-acid sequence, 862 residues long: MASEDRYNVKETEAKWQTAWAEGGCFTAREDRTRPKYYVLEMFPYPSGRIHMGHVRNYTLGDVVARFKRAQGFNVLHPMGWDAFGLPAENAAIQRGVHPATWTRQNIAIMREQFKPMGLSIDWSREVSTCEPAYYRHEQKMFLDFLKAGLAYRRESWVNWDPVEHTVLANEQVIDGKGWRSGAPVERRKLSQWFLRITRYAEDLLAAIGDLDRWPDKVRLMQTNWIGRSEGARVRFGLVGRDQALEVYTTRPDTLFGASFCAISANHPLAAEIAATNPDLAAFIAECGRMGTSEVEIETAEKKGFDTGLKVRHPFDPAWELPVYVANFVLMEYGTGAIFGCPAHDQRDMDFARKYGLPVRAVVAPAGVDAEAFAKDLEASDTAFSEDGVAIASGFLDGLPVSEAKARAIAHIAELGAGEGVVQFRLRDWGVSRQRYWGCPIPIIHCDDCGPVPVPEDQLPVLLPEDVTFDKPGNPLDHHPTWKHVACPQCGKPARRETDTFDTFFESSWYFARFCAPHDTDRAFEREAVDYWLPVDQYVGGVEHAVLHLLYSRFFTRALRDCGYLGVSEPFTGLFTQGMICHETYRDTDGAWLSPDQIDKAADGTATLLSDGSPVSVGRSEKMSKSKMNTVDPTAILESYGADAARLFMLSDSPPDRDMDWTDSGIEGAWRYIGRLWRMALQPQIDPGAVGAPLPADLGPGAAALVRHVHKAVAGVTDDLEKFRFNAAVARLRELTNAIAALDGKEAGAGAVYRFALETAARLAAPMIPHIAEEMWSHLGRDGLLAETPWPTWDPLMLIDDQVTIAVQVNGKMRGTVDLPKDAKREDAEAAALALPTVLAQLAGAAPRKVIVVPNRIINVVV.

Positions 44–54 (PYPSGRIHMGH) match the 'HIGH' region motif. Residues 622–626 (KMSKS) carry the 'KMSKS' region motif. Lys-625 serves as a coordination point for ATP.

Belongs to the class-I aminoacyl-tRNA synthetase family.

Its subcellular location is the cytoplasm. It catalyses the reaction tRNA(Leu) + L-leucine + ATP = L-leucyl-tRNA(Leu) + AMP + diphosphate. This Rhodospirillum rubrum (strain ATCC 11170 / ATH 1.1.1 / DSM 467 / LMG 4362 / NCIMB 8255 / S1) protein is Leucine--tRNA ligase.